Here is an 876-residue protein sequence, read N- to C-terminus: Pre-mRNA-splicing factor ATP-dependent RNA helicase-like protein PRP2 (876 aa).

The disordered stretch occupies residues 1 to 111; it reads MSSITSETGK…KGLLGDSENE (111 aa). Residue serine 2 is modified to N-acetylserine. Residues 61-70 are compositionally biased toward polar residues; that stretch reads VFSNTNQGPE. The 167-residue stretch at 233 to 399 folds into the Helicase ATP-binding domain; the sequence is LQEIKKNQVL…FDNCPIFNVP (167 aa). 246 to 253 contributes to the ATP binding site; it reads GETGSGKT. Residues 346–349 carry the DEAH box motif; the sequence is DEAH. The 175-residue stretch at 424–598 folds into the Helicase C-terminal domain; the sequence is TIFQIHTTQS…NTVLLLLSLG (175 aa).

The protein belongs to the DEAD box helicase family. DEAH subfamily. As to quaternary structure, interacts directly with pre-mRNA. According to PubMed:2251118, associated with spliceosomes prior to and throughout step 1 of the splicing reaction. According to PubMed:8943336, it leaves the spliceosome before reaction 1. Interacts with SPP2.

It is found in the nucleus. The enzyme catalyses ATP + H2O = ADP + phosphate + H(+). In terms of biological role, involved in pre-mRNA splicing. Is required together with ATP and at least one other factor, for the first cleavage-ligation reaction. Functions as a molecular motor in the activation of the precatalytic spliceosome for the first transesterification reaction of pre-mRNA splicing by hydrolyzing ATP to cause the activation of the spliceosome without the occurrence of splicing. Capable of hydrolyzing nucleoside triphosphates in the presence of single-stranded RNAs such as poly(U). In Saccharomyces cerevisiae (strain ATCC 204508 / S288c) (Baker's yeast), this protein is Pre-mRNA-splicing factor ATP-dependent RNA helicase-like protein PRP2 (PRP2).